A 220-amino-acid polypeptide reads, in one-letter code: Phosphoserine phosphatase (220 aa).

Aspartate 11 serves as the catalytic Nucleophile. Aspartate 11 and aspartate 13 together coordinate Mg(2+). The Proton donor role is filled by aspartate 13. Substrate contacts are provided by residues glutamate 20, arginine 56, 99–100 (SG), and lysine 144. Aspartate 167 contributes to the Mg(2+) binding site. Asparagine 170 lines the substrate pocket.

This sequence belongs to the HAD-like hydrolase superfamily. SerB family. The cofactor is Mg(2+).

The catalysed reaction is O-phospho-L-serine + H2O = L-serine + phosphate. It catalyses the reaction O-phospho-D-serine + H2O = D-serine + phosphate. It functions in the pathway amino-acid biosynthesis; L-serine biosynthesis; L-serine from 3-phospho-D-glycerate: step 3/3. This is Phosphoserine phosphatase from Idiomarina loihiensis (strain ATCC BAA-735 / DSM 15497 / L2-TR).